The chain runs to 422 residues: Elongation factor 1-alpha (422 aa).

The 217-residue stretch at 5–221 (KPHMNLAVIG…NSLKEPEKPS (217 aa)) folds into the tr-type G domain. The tract at residues 14–21 (GHIDHGKS) is G1. Residue 14–21 (GHIDHGKS) participates in GTP binding. A Mg(2+)-binding site is contributed by Ser21. Residues 70–74 (GITID) form a G2 region. Residues 91–94 (DCPG) are G3. GTP contacts are provided by residues 91–95 (DCPGH) and 146–149 (NKMD). The interval 146-149 (NKMD) is G4. The tract at residues 185–187 (SAF) is G5.

This sequence belongs to the TRAFAC class translation factor GTPase superfamily. Classic translation factor GTPase family. EF-Tu/EF-1A subfamily.

Its subcellular location is the cytoplasm. It carries out the reaction GTP + H2O = GDP + phosphate + H(+). Its function is as follows. GTP hydrolase that promotes the GTP-dependent binding of aminoacyl-tRNA to the A-site of ribosomes during protein biosynthesis. The protein is Elongation factor 1-alpha of Methanosarcina mazei (strain ATCC BAA-159 / DSM 3647 / Goe1 / Go1 / JCM 11833 / OCM 88) (Methanosarcina frisia).